The following is a 234-amino-acid chain: Sugar fermentation stimulation protein A (234 aa).

A DNA-binding region (H-T-H motif) is located at residues 201 to 220 (LLSEAQNKGVEVLAYKAELS).

The protein belongs to the SfsA family.

In terms of biological role, binds to DNA non-specifically. Could be a regulatory factor involved in maltose metabolism. The protein is Sugar fermentation stimulation protein A of Salmonella arizonae (strain ATCC BAA-731 / CDC346-86 / RSK2980).